We begin with the raw amino-acid sequence, 1548 residues long: Nuclear factor of activated T-cells 5 (1548 aa).

Residues 54 to 106 (QLPPPRETSAASMSQTSGGEAGSPPPAVVAADASSAPSSSMGGACSSFTTSSS) are disordered. A compositionally biased stretch (low complexity) spans 81–106 (VVAADASSAPSSSMGGACSSFTTSSS). Phosphoserine is present on S137. N6-acetyllysine is present on K139. Residues 141-151 (LTGNTVQQHPS) show a composition bias toward polar residues. 3 disordered regions span residues 141–180 (LTGNTVQQHPSTPKRHTVLYISPPPEDLLDNSRMSCQDEG), 192–237 (WMED…CEES), and 258–282 (TTDNKGNSKAGNGTLDSQKGTGVKK). S151 bears the Phosphoserine mark. T152 carries the post-translational modification Phosphothreonine; by CDK5. A Phosphoserine modification is found at S172. The segment covering 196–209 (SPSNFSNMSTSSYN) has biased composition (low complexity). A compositionally biased stretch (basic residues) spans 217–229 (KSRKRNPKQRPGV). A compositionally biased stretch (polar residues) spans 258–277 (TTDNKGNSKAGNGTLDSQKG). The RHD domain maps to 281–460 (KKSPMLCGQY…SPILCTQPAG (180 aa)). Residues 310–317 (RARYLTEG) mediate DNA binding. Residue K572 forms a Glycyl lysine isopeptide (Lys-Gly) (interchain with G-Cter in SUMO1); alternate linkage. K572 is covalently cross-linked (Glycyl lysine isopeptide (Lys-Gly) (interchain with G-Cter in SUMO2); alternate). At S577 the chain carries Phosphoserine. Residue K619 forms a Glycyl lysine isopeptide (Lys-Gly) (interchain with G-Cter in SUMO2) linkage. 6 disordered regions span residues 659 to 682 (GNASFSSPSSSHLSPENENQQQLQ), 750 to 777 (TEAPQQQQSPLQEQAQIPSNIFPSPNSV), 851 to 892 (PGMF…QQQQ), 970 to 1010 (SPPA…GAQA), 1097 to 1127 (LSQETQGPMFHSANPIVHSQTSTASSEQLQP), and 1257 to 1388 (MQSN…QEQQ). Composition is skewed to low complexity over residues 662–672 (SFSSPSSSHLS) and 751–765 (EAPQQQQSPLQEQAQ). Polar residues-rich tracts occupy residues 766-777 (IPSNIFPSPNSV), 851-860 (PGMFSSTESA), and 876-886 (VHQQTENTLSS). The segment covering 979–993 (TSTTTTPQVATPGST) has biased composition (low complexity). Residues 1113 to 1127 (VHSQTSTASSEQLQP) show a composition bias toward polar residues. The segment covering 1264-1283 (QEQQQQQQQQQQQQQQQQQQ) has biased composition (low complexity). 2 stretches are compositionally biased toward polar residues: residues 1284–1300 (SILFSNQNAMATMASQK) and 1308–1333 (FSPNQNPMASQEQQNQSIFHQQSNMA). The segment covering 1334–1348 (PMNQEQQPMQFQNQP) has biased composition (low complexity). Residues 1349–1388 (TVSSLQNPGPTPSESPQTSLFHSSPQIQLVQGSPSSQEQQ) show a composition bias toward polar residues.

Homodimer when bound to DNA, completely encircles its DNA target. Interacts with CIDEC; this interaction is direct and retains NFAT5 in the cytoplasm. Does not bind with Fos and Jun transcription factors. Interacts with DDX5 and DDX17; this interaction leads to DDX5/DDX17 recruitment to LNC2 and S100A4 promoters and NFAT5-mediated DDX5/DDX17-enhanced transactivation. Post-translationally, phosphorylated. Phosphorylated at Thr-152 by CDK5 in response to osmotic stress; this phosphorylation mediates its rapid nuclear localization. Poly-ADP-ribosylated by PARP1 in response to DNA damage, promoting recruitment to sites of R-loop-associated DNA damage.

The protein resides in the nucleus. Its subcellular location is the cytoplasm. The protein localises to the chromosome. Functionally, transcription factor involved, among others, in the transcriptional regulation of osmoprotective and inflammatory genes. Binds the DNA consensus sequence 5'-[ACT][AG]TGGAAA[CAT]A[TA][ATC][CA][ATG][GT][GAC][CG][CT]-3'. Mediates the transcriptional response to hypertonicity. Positively regulates the transcription of LCN2 and S100A4 genes; optimal transactivation of these genes requires the presence of DDX5/DDX17. Also involved in the DNA damage response by preventing formation of R-loops; R-loops are composed of a DNA:RNA hybrid and the associated non-template single-stranded DNA. The sequence is that of Nuclear factor of activated T-cells 5 (Nfat5) from Rattus norvegicus (Rat).